A 476-amino-acid chain; its full sequence is Splicing factor ESS-2 homolog (476 aa).

Met-1 is modified (N-acetylmethionine). Residues 1–18 show a composition bias toward low complexity; it reads METPGASASSLLLPAASR. 2 disordered regions span residues 1 to 36 and 91 to 148; these read METPGASASSLLLPAASRPPRKREAGEAGAATSKQR and LGKM…LPSL. Thr-3 carries the phosphothreonine modification. A compositionally biased stretch (acidic residues) spans 133-142; it reads DGEAGEEEEK. Lys-142 participates in a covalent cross-link: Glycyl lysine isopeptide (Lys-Gly) (interchain with G-Cter in SUMO2). Ser-292 bears the Phosphoserine mark. Phosphothreonine is present on Thr-386. A phosphoserine mark is found at Ser-391 and Ser-395. The tract at residues 413-465 is disordered; the sequence is ALRASYTPSPARSTHLKTPASGLQTPTSTPAPGSATRTPLTQDPASITDNLLQ. Over residues 437 to 451 the composition is skewed to low complexity; sequence TPTSTPAPGSATRTP. Positions 452-463 are enriched in polar residues; the sequence is LTQDPASITDNL.

The protein belongs to the ESS2 family. In terms of assembly, identified in the spliceosome C complex. Interacts with FRA10AC1. In terms of tissue distribution, highly expressed in heart, brain and skeletal muscle. Detected at low levels in placenta.

It is found in the nucleus. Functionally, may be involved in pre-mRNA splicing. In Homo sapiens (Human), this protein is Splicing factor ESS-2 homolog.